We begin with the raw amino-acid sequence, 680 residues long: Fermitin family homolog 2 (680 aa).

The tract at residues 40–81 is interaction with membranes containing phosphatidylinositol phosphate; that stretch reads HIGGVMLKLVEKLDVKKDWSDHALWWEKKRTWLLKTHWTLDK. The segment at 141–165 is disordered; it reads LKKPRDPTKKKKKKLDDQSEDEALE. Residues S159, S181, S339, and S351 each carry the phosphoserine modification. The region spanning 189–661 is the FERM domain; that stretch reads MTPTYDAHDG…GYIFLSTRAK (473 aa). Positions 380 to 476 constitute a PH domain; it reads KVFKPKKLTL…WMAACRLASK (97 aa). K383 is a binding site for a 1,2-diacyl-sn-glycero-3-phospho-(1D-myo-inositol-3,4,5-trisphosphate). Position 666 is a phosphoserine (S666).

The protein belongs to the kindlin family. Interacts with ILK. Interacts with FBLIM1. Interacts with ITGB1 and ITGB3. Interacts with active, unphosphorylated CTNNB1. Identified in a complex with CTNNB1 and TCF7L2/TCF4. Interacts with ITGB1; the interaction is inhibited in presence of ITGB1BP1. Ubiquitous. Found in numerous tumor tissues.

The protein localises to the cytoplasm. The protein resides in the cell cortex. Its subcellular location is the cytoskeleton. It localises to the stress fiber. It is found in the cell junction. The protein localises to the focal adhesion. The protein resides in the membrane. Its subcellular location is the cell projection. It localises to the lamellipodium membrane. It is found in the nucleus. The protein localises to the myofibril. The protein resides in the sarcomere. Its subcellular location is the i band. It localises to the cell surface. Scaffolding protein that enhances integrin activation mediated by TLN1 and/or TLN2, but activates integrins only weakly by itself. Binds to membranes enriched in phosphoinositides. Enhances integrin-mediated cell adhesion onto the extracellular matrix and cell spreading; this requires both its ability to interact with integrins and with phospholipid membranes. Required for the assembly of focal adhesions. Participates in the connection between extracellular matrix adhesion sites and the actin cytoskeleton and also in the orchestration of actin assembly and cell shape modulation. Recruits FBLIM1 to focal adhesions. Plays a role in the TGFB1 and integrin signaling pathways. Stabilizes active CTNNB1 and plays a role in the regulation of transcription mediated by CTNNB1 and TCF7L2/TCF4 and in Wnt signaling. This chain is Fermitin family homolog 2 (FERMT2), found in Homo sapiens (Human).